Reading from the N-terminus, the 198-residue chain is Na(+)-translocating NADH-quinone reductase subunit E (198 aa).

A run of 6 helical transmembrane segments spans residues 11 to 31 (SIFIENMALSFFLGMCTFLAV), 39 to 59 (FGLGIAVTVVLTISVPVNNLV), 77 to 97 (FLNFITFIGVIAALVQILEMI), 110 to 130 (GIFLPLITVNCAIFGGVSFMV), 140 to 160 (VVYGFGSGVGWMLAIVALAGI), and 176 to 196 (LGITFITAGLMALGFMSFSGV).

This sequence belongs to the NqrDE/RnfAE family. Composed of six subunits; NqrA, NqrB, NqrC, NqrD, NqrE and NqrF.

It is found in the cell inner membrane. It carries out the reaction a ubiquinone + n Na(+)(in) + NADH + H(+) = a ubiquinol + n Na(+)(out) + NAD(+). Functionally, NQR complex catalyzes the reduction of ubiquinone-1 to ubiquinol by two successive reactions, coupled with the transport of Na(+) ions from the cytoplasm to the periplasm. NqrA to NqrE are probably involved in the second step, the conversion of ubisemiquinone to ubiquinol. This Vibrio anguillarum (Listonella anguillarum) protein is Na(+)-translocating NADH-quinone reductase subunit E.